The primary structure comprises 262 residues: Catechol O-methyltransferase domain-containing protein 1 (262 aa).

The chain crosses the membrane as a helical; Signal-anchor for type II membrane protein span at residues 12–32 (AALALGSAALGAAFATGLLLG). S-adenosyl-L-methionine is bound by residues Asp108, 110–111 (GT), Ser116, Glu134, Val135, Ala163, Asp185, Asp187, and Tyr194.

It belongs to the class I-like SAM-binding methyltransferase superfamily. Cation-dependent O-methyltransferase family. As to quaternary structure, homodimer.

The protein localises to the membrane. Putative O-methyltransferase. The polypeptide is Catechol O-methyltransferase domain-containing protein 1 (Comtd1) (Mus musculus (Mouse)).